Here is a 273-residue protein sequence, read N- to C-terminus: Ribosomal RNA small subunit methyltransferase A (273 aa).

6 residues coordinate S-adenosyl-L-methionine: N18, L20, G45, E66, D91, and N113.

The protein belongs to the class I-like SAM-binding methyltransferase superfamily. rRNA adenine N(6)-methyltransferase family. RsmA subfamily.

It is found in the cytoplasm. It catalyses the reaction adenosine(1518)/adenosine(1519) in 16S rRNA + 4 S-adenosyl-L-methionine = N(6)-dimethyladenosine(1518)/N(6)-dimethyladenosine(1519) in 16S rRNA + 4 S-adenosyl-L-homocysteine + 4 H(+). In terms of biological role, specifically dimethylates two adjacent adenosines (A1518 and A1519) in the loop of a conserved hairpin near the 3'-end of 16S rRNA in the 30S particle. May play a critical role in biogenesis of 30S subunits. The polypeptide is Ribosomal RNA small subunit methyltransferase A (Shigella flexneri).